The following is a 74-amino-acid chain: Small ribosomal subunit protein eS28 (74 aa).

This sequence belongs to the eukaryotic ribosomal protein eS28 family.

The chain is Small ribosomal subunit protein eS28 from Halorubrum lacusprofundi (strain ATCC 49239 / DSM 5036 / JCM 8891 / ACAM 34).